The following is a 51-amino-acid chain: MRMKKCPKCGKYTLKDFCSGCNEKSVTIKPPRFSPVDKYGKYRRALKKAKM.

The protein belongs to the NOP10 family.

Involved in ribosome biogenesis; more specifically in 18S rRNA pseudouridylation and in cleavage of pre-rRNA. The polypeptide is Ribosome biogenesis protein Nop10 (Methanococcus maripaludis (strain C7 / ATCC BAA-1331)).